A 248-amino-acid polypeptide reads, in one-letter code: Peptidyl-prolyl cis-trans isomerase, chloroplastic (248 aa).

The region spanning 85-243 (FFDIEIGGES…KPCKIAKSGE (159 aa)) is the PPIase cyclophilin-type domain. The disordered stretch occupies residues 223-248 (QETSKLDNSPKKPCKIAKSGELPLDG).

This sequence belongs to the cyclophilin-type PPIase family. In terms of tissue distribution, highly expressed in leaf.

It localises to the plastid. The protein resides in the chloroplast stroma. It catalyses the reaction [protein]-peptidylproline (omega=180) = [protein]-peptidylproline (omega=0). With respect to regulation, binds cyclosporin A (CsA). CsA mediates some of its effects via an inhibitory action on PPIase. Functionally, PPIases accelerate the folding of proteins. It catalyzes the cis-trans isomerization of proline imidic peptide bonds in oligopeptides. The sequence is that of Peptidyl-prolyl cis-trans isomerase, chloroplastic from Vicia faba (Broad bean).